Here is a 628-residue protein sequence, read N- to C-terminus: NUAK family SNF1-like kinase 2 (628 aa).

N-acetylmethionine is present on methionine 1. One can recognise a Protein kinase domain in the interval 53 to 303; it reads YEFLETLGKG…LEDVASHWWV (251 aa). Residues 59–67 and lysine 81 contribute to the ATP site; that span reads LGKGTYGKV. The active-site Proton acceptor is aspartate 175. Position 208 is a phosphothreonine (threonine 208). Disordered stretches follow at residues 355 to 492 and 522 to 570; these read KQHA…PQAS and GSLD…PLRG. Residues 428–444 are compositionally biased toward pro residues; the sequence is ELSPIPVSPGQAAPPLP. Serine 435 is modified (phosphoserine). Low complexity predominate over residues 457–469; the sequence is SGYYSSPEPSESG. Residues serine 523, serine 544, serine 547, and serine 573 each carry the phosphoserine modification.

Belongs to the protein kinase superfamily. CAMK Ser/Thr protein kinase family. SNF1 subfamily. It depends on Mg(2+) as a cofactor. Phosphorylated at Thr-208 by STK11/LKB1 in complex with STE20-related adapter-alpha (STRADA) pseudo kinase and CAB39. Autophosphorylation is also possible at Thr-208.

The enzyme catalyses L-seryl-[protein] + ATP = O-phospho-L-seryl-[protein] + ADP + H(+). It carries out the reaction L-threonyl-[protein] + ATP = O-phospho-L-threonyl-[protein] + ADP + H(+). With respect to regulation, activated by phosphorylation on Thr-208. Stress-activated kinase involved in tolerance to glucose starvation. Induces cell-cell detachment by increasing F-actin conversion to G-actin. Expression is induced by CD95 or TNF-alpha, via NF-kappa-B. Protects cells from CD95-mediated apoptosis and is required for the increased motility and invasiveness of CD95-activated tumor cells. Phosphorylates LATS1 and LATS2. Plays a key role in neural tube closure during embryonic development through LATS2 phosphorylation and regulation of the nuclear localization of YAP1 a critical downstream regulatory target in the Hippo signaling pathway. This chain is NUAK family SNF1-like kinase 2, found in Pongo abelii (Sumatran orangutan).